Consider the following 109-residue polypeptide: Short-chain dehydrogenase/reductase homolog YusS (109 aa).

Belongs to the short-chain dehydrogenases/reductases (SDR) family.

In Bacillus subtilis (strain 168), this protein is Short-chain dehydrogenase/reductase homolog YusS (yusS).